The sequence spans 174 residues: Shikimate kinase 2 (174 aa).

Residue 12–17 (GCGKTT) participates in ATP binding. Mg(2+) contacts are provided by Thr16 and Asp32. Substrate is bound by residues Asp34, Arg58, and Gly79. The segment at 112–126 (QAAPEEDLRPTLTGK) is LID domain. Position 120 (Arg120) interacts with ATP. Position 139 (Arg139) interacts with substrate.

This sequence belongs to the shikimate kinase family. AroL subfamily. As to quaternary structure, monomer. Requires Mg(2+) as cofactor.

The protein resides in the cytoplasm. The catalysed reaction is shikimate + ATP = 3-phosphoshikimate + ADP + H(+). It participates in metabolic intermediate biosynthesis; chorismate biosynthesis; chorismate from D-erythrose 4-phosphate and phosphoenolpyruvate: step 5/7. In terms of biological role, catalyzes the specific phosphorylation of the 3-hydroxyl group of shikimic acid using ATP as a cosubstrate. This is Shikimate kinase 2 from Shigella boydii serotype 18 (strain CDC 3083-94 / BS512).